The following is a 1553-amino-acid chain: ABC-type transporter cctS (1553 aa).

4 helical membrane passes run 27-47, 90-110, 114-134, and 151-171; these read LIPLTACLASAIACLISYFHA, LEVALILAEISIAIFLLIFSG, DLTSVFASAVSSIYLLLILFV, and SVLYTLQWTCLTAIVHAAILG. N-linked (GlcNAc...) asparagine glycosylation is present at Asn-176. 5 helical membrane passes run 177 to 197, 286 to 306, 324 to 344, 413 to 433, and 438 to 458; these read FTIATLVRFALFTFLCLFHWT, LLWQGAWATLNSFAVFVPPVL, TAWLYVTGLLVAGIVAGVAGC, GYLYLVWITFPVQTAIGTYLL, and GISGIVGVALMLGLLPLNILI. The region spanning 293–582 is the ABC transmembrane type-1 1 domain; that stretch reads ATLNSFAVFV…IADAITFLLR (290 aa). A glycan (N-linked (GlcNAc...) asparagine) is linked at Asn-524. 2 consecutive transmembrane segments (helical) span residues 527 to 547 and 550 to 570; these read TFFSLPLIVTILTLFFYTVVW and SMGTAVAFPALVIFSILRIPF. A glycan (N-linked (GlcNAc...) asparagine) is linked at Asn-617. Positions 635 to 874 constitute an ABC transporter 1 domain; the sequence is NKRSDIQLTE…GRIDADIMQN (240 aa). ATP is bound at residue 670–677; that stretch reads GPSGSGKS. Residue Asn-725 is glycosylated (N-linked (GlcNAc...) asparagine). A helical transmembrane segment spans residues 948–970; that stretch reads WYWVLVLFMFGIQQFISLATNIW. Residues 951–1255 enclose the ABC transmembrane type-1 2 domain; sequence VLVLFMFGIQ…FVQLYAIVQQ (305 aa). The N-linked (GlcNAc...) asparagine glycan is linked to Asn-992. Residues 1017–1037 traverse the membrane as a helical segment; it reads IYVAICLAYAFFTFARDLIVF. Asn-1085 carries N-linked (GlcNAc...) asparagine glycosylation. 4 helical membrane passes run 1086–1108, 1113–1135, 1204–1224, and 1229–1249; these read ISTFSINTLQIAASLVMIIVFIS, AFLIAAVFICVAYWFVMTIFING, FLGSLILFFTGAFVVWDLESV, and AALVLTYAAMFSESIMWFVQL. The ABC transporter 2 domain occupies 1294–1533; that stretch reads VRFDAYTTRY…DDDGIFRRLC (240 aa). 1328 to 1335 contributes to the ATP binding site; sequence GRTGAGKS.

Belongs to the ABC transporter superfamily.

The protein localises to the membrane. It participates in mycotoxin biosynthesis. Functionally, ABC-type transporter; part of the gene cluster that mediates the biosynthesis of the mycotoxin cyclochlorotine, a hepatotoxic and carcinogenic cyclic chlorinated pentapeptide. CctS is essential for the biosynthesis of cyclochlorotine, maybe as a chloride channel that supplies chloride for chlorination by cctP2. The protein is ABC-type transporter cctS of Talaromyces islandicus (Penicillium islandicum).